Here is a 79-residue protein sequence, read N- to C-terminus: Acyl carrier protein (79 aa).

In terms of domain architecture, Carrier spans 2-77 (SDIEARVKKI…NAVDYATKNQ (76 aa)). S37 is subject to O-(pantetheine 4'-phosphoryl)serine.

It belongs to the acyl carrier protein (ACP) family. In terms of processing, 4'-phosphopantetheine is transferred from CoA to a specific serine of apo-ACP by AcpS. This modification is essential for activity because fatty acids are bound in thioester linkage to the sulfhydryl of the prosthetic group.

Its subcellular location is the cytoplasm. The protein operates within lipid metabolism; fatty acid biosynthesis. Its function is as follows. Carrier of the growing fatty acid chain in fatty acid biosynthesis. The chain is Acyl carrier protein from Variovorax paradoxus (strain S110).